The chain runs to 158 residues: CD-NTase/cGAS isopeptidase (158 aa).

The active-site Proton donor/acceptor is Glu38. Residues His100, His102, and Asp113 each coordinate Zn(2+).

This sequence belongs to the peptidase M67B family. Cap3 isopeptidase subfamily.

Metalloprotease priming reversal component of a CBASS antivirus system. CBASS (cyclic oligonucleotide-based antiphage signaling system) provides immunity against bacteriophages. The CD-NTase protein synthesizes cyclic nucleotides in response to infection; these serve as specific second messenger signals. The signals activate a diverse range of effectors, leading to bacterial cell death and thus abortive phage infection. A type II-A(GA) CBASS system. Functionally, reverses the primed state of CdnA, the CD-NTase. In terms of biological role, the capV-cdnA-cap2-cap3 operon provides about 10(4)-fold protection in strain BWHPSA011 against infection by phage PaMx41. In P.aeruginosa strain PAO1 it confers protection against phages PaMx41 and JBD18 but not JBD67 (JBD18 and JBD67 do not replicate in BWHPSA011 / Pa011). When acb2 in JBD67 is deleted this CBASS operon then protects against JDB67 also. This CBASS system limits prophage induction of lysogenized JBD67 as well as viral lytic replication. The protein is CD-NTase/cGAS isopeptidase of Pseudomonas aeruginosa (strain BWHPSA011 / Pa011).